The chain runs to 266 residues: Phosphatidylglycerol--prolipoprotein diacylglyceryl transferase (266 aa).

The next 7 membrane-spanning stretches (helical) occupy residues 10-30, 56-76, 92-112, 120-140, 171-191, 199-219, and 233-253; these read VALAIGPLKIHWYGLMYLIGI, LVFWVACGVILGGRLGYVLFY, WKGGMSFHGGLLGVMLAVWWF, FFQLMDFIAPLVPIGLGAGRI, PSQLYQFALEGVALFVILWLF, ASVSGLFVLCYGIFRFVVEFV, and WLTMGQVLCVPMVLAGIALMV. Arginine 139 provides a ligand contact to a 1,2-diacyl-sn-glycero-3-phospho-(1'-sn-glycerol).

Belongs to the Lgt family.

It localises to the cell inner membrane. It carries out the reaction L-cysteinyl-[prolipoprotein] + a 1,2-diacyl-sn-glycero-3-phospho-(1'-sn-glycerol) = an S-1,2-diacyl-sn-glyceryl-L-cysteinyl-[prolipoprotein] + sn-glycerol 1-phosphate + H(+). The protein operates within protein modification; lipoprotein biosynthesis (diacylglyceryl transfer). Its function is as follows. Catalyzes the transfer of the diacylglyceryl group from phosphatidylglycerol to the sulfhydryl group of the N-terminal cysteine of a prolipoprotein, the first step in the formation of mature lipoproteins. The chain is Phosphatidylglycerol--prolipoprotein diacylglyceryl transferase from Pseudomonas paraeruginosa (strain DSM 24068 / PA7) (Pseudomonas aeruginosa (strain PA7)).